The chain runs to 32 residues: Calichemicin antitumor antibiotic biosynthesis protein (32 aa).

The sequence is that of Calichemicin antitumor antibiotic biosynthesis protein from Micromonospora echinospora (Micromonospora purpurea).